The sequence spans 329 residues: DNA-directed RNA polymerase subunit alpha (329 aa).

The segment at 1–235 (MQGSVIEFLK…EQLDAFVDLR (235 aa)) is alpha N-terminal domain (alpha-NTD). The alpha C-terminal domain (alpha-CTD) stretch occupies residues 249-329 (FDPILLRPVD…NWPPASIAED (81 aa)).

Belongs to the RNA polymerase alpha chain family. As to quaternary structure, homodimer. The RNAP catalytic core consists of 2 alpha, 1 beta, 1 beta' and 1 omega subunit. When a sigma factor is associated with the core the holoenzyme is formed, which can initiate transcription.

The enzyme catalyses RNA(n) + a ribonucleoside 5'-triphosphate = RNA(n+1) + diphosphate. Functionally, DNA-dependent RNA polymerase catalyzes the transcription of DNA into RNA using the four ribonucleoside triphosphates as substrates. This Haemophilus ducreyi (strain 35000HP / ATCC 700724) protein is DNA-directed RNA polymerase subunit alpha.